The primary structure comprises 82 residues: Penaeidin-3g (82 aa).

Positions Met1 to Gly19 are cleaved as a signal peptide. Position 20 is a pyrrolidone carboxylic acid (Gln20). 3 cysteine pairs are disulfide-bonded: Cys51–Cys66, Cys55–Cys73, and Cys67–Cys74. Ser81 bears the Serine amide mark.

It belongs to the penaeidin family.

The protein resides in the cytoplasmic granule. Its function is as follows. Antibacterial and antifungal activity. Presents chitin-binding activity. This chain is Penaeidin-3g, found in Penaeus vannamei (Whiteleg shrimp).